The following is a 515-amino-acid chain: Fatty acyl-CoA reductase 1 (515 aa).

Over 1–465 (MLSIPEFYQG…ARKHLNKLRN (465 aa)) the chain is Cytoplasmic. A helical membrane pass occupies residues 466–484 (IRYGFNTILVVLIWRVFIA). Over 485–515 (RSQMARNIWYFVVSMCFKFLSYFRASSTMRY) the chain is Peroxisomal.

The protein belongs to the fatty acyl-CoA reductase family.

The protein resides in the peroxisome membrane. It carries out the reaction a long-chain fatty acyl-CoA + 2 NADPH + 2 H(+) = a long-chain primary fatty alcohol + 2 NADP(+) + CoA. It catalyses the reaction hexadecanoyl-CoA + 2 NADPH + 2 H(+) = hexadecan-1-ol + 2 NADP(+) + CoA. The enzyme catalyses octadecanoyl-CoA + 2 NADPH + 2 H(+) = octadecan-1-ol + 2 NADP(+) + CoA. The catalysed reaction is (9Z)-octadecenoyl-CoA + 2 NADPH + 2 H(+) = (9Z)-octadecen-1-ol + 2 NADP(+) + CoA. It carries out the reaction (9Z,12Z)-octadecadienoyl-CoA + 2 NADPH + 2 H(+) = (9Z,12Z)-octadecadien-1-ol + 2 NADP(+) + CoA. It catalyses the reaction eicosanoyl-CoA + 2 NADPH + 2 H(+) = eicosan-1-ol + 2 NADP(+) + CoA. The enzyme catalyses 16-methylheptadecanoyl-CoA + 2 NADPH + 2 H(+) = 16-methylheptadecan-1-ol + 2 NADP(+) + CoA. The catalysed reaction is 18-methylnonadecanoyl-CoA + 2 NADPH + 2 H(+) = 18-methylnonadecan-1-ol + 2 NADP(+) + CoA. Functionally, catalyzes the reduction of saturated and unsaturated C16 or C18 fatty acyl-CoA to fatty alcohols. It plays an essential role in the production of ether lipids/plasmalogens which synthesis requires fatty alcohols. In parallel, it is also required for wax monoesters production since fatty alcohols also constitute a substrate for their synthesis. The chain is Fatty acyl-CoA reductase 1 (far1) from Xenopus laevis (African clawed frog).